The chain runs to 559 residues: Potassium-transporting ATPase potassium-binding subunit (559 aa).

A run of 12 helical transmembrane segments spans residues 5–25 (GFLLTASFLLILFVLARPLGV), 63–83 (LLAILTLNLLGLTVLFLMLLG), 132–152 (GLTVQNFLSAATGIAVIFALI), 170–190 (LVRITLWILLPLALLIALLFI), 250–270 (LTNMVQMLAIFLIPAALCFAF), 283–303 (LLWAMSIIFVVCVAVVMSAEV), 329–349 (VLVSSLFAVVTTAASCGAVIA), 356–376 (ALGGMVPMWLMQIGEVVFGGV), 379–399 (GLYGMLLFVLLAVFIAGLMIG), 416–436 (MTALAILITPTLVLLGTALAM), 484–504 (LLAFCMFVGRFGVIIPVMAIA), and 524–544 (GALFVGLLIGTVLLVGALTFI).

This sequence belongs to the KdpA family. The system is composed of three essential subunits: KdpA, KdpB and KdpC.

Its subcellular location is the cell inner membrane. Functionally, part of the high-affinity ATP-driven potassium transport (or Kdp) system, which catalyzes the hydrolysis of ATP coupled with the electrogenic transport of potassium into the cytoplasm. This subunit binds the periplasmic potassium ions and delivers the ions to the membrane domain of KdpB through an intramembrane tunnel. This is Potassium-transporting ATPase potassium-binding subunit from Citrobacter koseri (strain ATCC BAA-895 / CDC 4225-83 / SGSC4696).